We begin with the raw amino-acid sequence, 525 residues long: Peptide chain release factor 3 (525 aa).

Residues 9–276 (AKRRTFAIIS…GFTRYAPAPQ (268 aa)) enclose the tr-type G domain. GTP is bound by residues 18-25 (SHPDAGKT), 86-90 (DTPGH), and 140-143 (NKFD).

The protein belongs to the TRAFAC class translation factor GTPase superfamily. Classic translation factor GTPase family. PrfC subfamily.

The protein resides in the cytoplasm. In terms of biological role, increases the formation of ribosomal termination complexes and stimulates activities of RF-1 and RF-2. It binds guanine nucleotides and has strong preference for UGA stop codons. It may interact directly with the ribosome. The stimulation of RF-1 and RF-2 is significantly reduced by GTP and GDP, but not by GMP. The polypeptide is Peptide chain release factor 3 (Francisella tularensis subsp. holarctica (strain FTNF002-00 / FTA)).